The primary structure comprises 80 residues: Protein FAM229B (80 aa).

Positions 1–44 (MPFRFGTQPRRFPVEGGDSSIGLEPGLSSSATCNGKEMSPTRQL) are disordered.

The protein belongs to the FAM229 family.

The sequence is that of Protein FAM229B (FAM229B) from Bos taurus (Bovine).